The primary structure comprises 206 residues: Ribosomal RNA small subunit methyltransferase G (206 aa).

S-adenosyl-L-methionine contacts are provided by residues G74, L79, 125–126 (VE), and R140.

This sequence belongs to the methyltransferase superfamily. RNA methyltransferase RsmG family.

The protein localises to the cytoplasm. It carries out the reaction guanosine(527) in 16S rRNA + S-adenosyl-L-methionine = N(7)-methylguanosine(527) in 16S rRNA + S-adenosyl-L-homocysteine. In terms of biological role, specifically methylates the N7 position of guanine in position 527 of 16S rRNA. In Shewanella sp. (strain MR-4), this protein is Ribosomal RNA small subunit methyltransferase G.